Reading from the N-terminus, the 477-residue chain is ATP synthase subunit beta (477 aa).

An ATP-binding site is contributed by G163–T170.

It belongs to the ATPase alpha/beta chains family. F-type ATPases have 2 components, CF(1) - the catalytic core - and CF(0) - the membrane proton channel. CF(1) has five subunits: alpha(3), beta(3), gamma(1), delta(1), epsilon(1). CF(0) has four main subunits: a(1), b(1), b'(1) and c(9-12).

It is found in the cellular thylakoid membrane. The catalysed reaction is ATP + H2O + 4 H(+)(in) = ADP + phosphate + 5 H(+)(out). In terms of biological role, produces ATP from ADP in the presence of a proton gradient across the membrane. The catalytic sites are hosted primarily by the beta subunits. This chain is ATP synthase subunit beta, found in Synechococcus sp. (strain JA-3-3Ab) (Cyanobacteria bacterium Yellowstone A-Prime).